The following is a 400-amino-acid chain: Phosphoglycerate kinase (400 aa).

Residues 22–24, R38, 61–64, R119, and R152 contribute to the substrate site; these read DFN and HLGR. Residues K205, G296, E327, and 353–356 each bind ATP; that span reads GGDT.

Belongs to the phosphoglycerate kinase family. Monomer.

The protein resides in the cytoplasm. It carries out the reaction (2R)-3-phosphoglycerate + ATP = (2R)-3-phospho-glyceroyl phosphate + ADP. The protein operates within carbohydrate degradation; glycolysis; pyruvate from D-glyceraldehyde 3-phosphate: step 2/5. This is Phosphoglycerate kinase from Campylobacter jejuni subsp. jejuni serotype O:2 (strain ATCC 700819 / NCTC 11168).